Here is a 707-residue protein sequence, read N- to C-terminus: MAP kinase-interacting serine/threonine-protein kinase mnk-1 (707 aa).

A compositionally biased stretch (polar residues) spans 1–24 (MFFLDNTDSMTSSSRGITMPNTIS). Disordered regions lie at residues 1–29 (MFFLDNTDSMTSSSRGITMPNTISSHEDV) and 101–131 (RQRERETYEDEDVLSSSDESSGRPIPRYVGR). The region spanning 203-493 (KLTDEHLGSG…ADQILSHRWL (291 aa)) is the Protein kinase domain. ATP-binding positions include 209-217 (LGSGAYGSV) and Lys232. Catalysis depends on Asp325, which acts as the Proton acceptor. 2 disordered regions span residues 589–628 (RSGEFTPPISRASPTTPPPSMLNLSEDLTDSPVKRRSADD) and 688–707 (FEDEQENANPIHRIETQVNV).

This sequence belongs to the protein kinase superfamily. CAMK Ser/Thr protein kinase family. The cofactor is Mg(2+). In terms of tissue distribution, expressed in pharynx, intestine, vulva and body wall muscles.

Its subcellular location is the nucleus. It localises to the cytoplasm. The catalysed reaction is L-seryl-[protein] + ATP = O-phospho-L-seryl-[protein] + ADP + H(+). The enzyme catalyses L-threonyl-[protein] + ATP = O-phospho-L-threonyl-[protein] + ADP + H(+). Its function is as follows. Serine/threonine-protein kinase which is required in the germline to positively regulate lifespan. May play a role in body wall muscle contraction. May be involved in embryonic cytokinesis. This Caenorhabditis elegans protein is MAP kinase-interacting serine/threonine-protein kinase mnk-1.